The sequence spans 236 residues: Envelope glycoprotein (236 aa).

The Lumenal segment spans residues 1–202 (CQFDGNTISG…EWILGVLNGN (202 aa)). Residue asparagine 25 is glycosylated (N-linked (GlcNAc...) asparagine; by host). Cystine bridges form between cysteine 67–cysteine 97, cysteine 90–cysteine 142, cysteine 107–cysteine 112, cysteine 143–cysteine 148, and cysteine 182–cysteine 186. Residues 203 to 223 (WMVVAVLIALLILSILLFTLC) form a helical membrane-spanning segment. Binding to the ribonucleoprotein stretches follow at residues 219 to 231 (LFTLCCPRRPSYR) and 219 to 236 (LFTLCCPRRPSYRKEHKP). Residues 224–236 (CPRRPSYRKEHKP) lie on the Cytoplasmic side of the membrane.

It belongs to the hantavirus envelope glycoprotein family. In terms of assembly, homodimer. Homotetramer; forms heterotetrameric Gn-Gc spikes in the pre-fusion conformation. Homotrimer; forms homotrimer in the post-fusion conformation at acidic pH. Interacts (via C-terminus) with the nucleoprotein. In terms of processing, envelope polyprotein precursor is quickly cleaved in vivo just after synthesis, presumably by host signal peptidase.

Its subcellular location is the virion membrane. The protein resides in the host cell surface. The protein localises to the host Golgi apparatus membrane. It is found in the host endoplasmic reticulum membrane. Functionally, forms homotetramers with glycoprotein N at the surface of the virion. Attaches the virion to host cell receptors including integrin ITGAV/ITGB3. This attachment induces virion internalization predominantly through clathrin-dependent endocytosis. Class II fusion protein that promotes fusion of viral membrane with host endosomal membrane after endocytosis of the virion. In Homo sapiens (Human), this protein is Envelope glycoprotein (GP).